Consider the following 525-residue polypeptide: Ribosomal protein S6 kinase beta-1 (525 aa).

Residues 1–54 (MRRRRRRDGFYPAPDFRDREAEDMAGVFDIDLDQPEDAGSEDELEEGGQLNESM) form a disordered region. Positions 28-32 (FDIDL) match the TOS motif motif. Acidic residues predominate over residues 30-46 (IDLDQPEDAGSEDELEE). One can recognise a Protein kinase domain in the interval 91-352 (FELLRVLGKG…AGEVQAHPFF (262 aa)). Residues 97–105 (LGKGGYGKV) and lysine 123 each bind ATP. Aspartate 218 functions as the Proton acceptor in the catalytic mechanism. Threonine 252 bears the Phosphothreonine; by PDPK1 mark. In terms of domain architecture, AGC-kinase C-terminal spans 353–423 (RHINWEELLA…VAPSVLESVK (71 aa)). Residues 380–399 (SQFDSKFTRQTPVDSPDDST) are disordered. Over residues 381–399 (QFDSKFTRQTPVDSPDDST) the composition is skewed to polar residues. A Phosphoserine modification is found at serine 394. A Phosphothreonine; by MTOR, NEK6 and NEK7 modification is found at threonine 412. Residues 424 to 525 (EKFSFEPKIR…KRPEHLRMNL (102 aa)) are autoinhibitory domain. Phosphoserine occurs at positions 434 and 441. Residue threonine 444 is modified to Phosphothreonine. Phosphoserine is present on residues serine 447 and serine 452. Residue lysine 516 is modified to N6-acetyllysine.

The protein belongs to the protein kinase superfamily. AGC Ser/Thr protein kinase family. S6 kinase subfamily. Interacts with PPP1R9A/neurabin-1. Interacts with RPTOR. Interacts with IRS1. Interacts with EIF3B and EIF3C. Interacts with TRAF4. Interacts with POLDIP3. Interacts (via N-terminus) with IER5. As to quaternary structure, (Microbial infection) Interacts with Mumps virus phosphoprotein; this interaction may play a role in the viral replication and transcription. In terms of processing, phosphorylation at Thr-412 is regulated by mTORC1. The phosphorylation at this site is maintained by an agonist-dependent autophosphorylation mechanism. Activated by phosphorylation at Thr-252 by PDPK1. Dephosphorylation by PPP1CC at Thr-412 in mitochondrion. In terms of tissue distribution, widely expressed.

It localises to the synapse. Its subcellular location is the synaptosome. The protein localises to the mitochondrion outer membrane. It is found in the mitochondrion. The protein resides in the nucleus. It localises to the cytoplasm. The catalysed reaction is L-seryl-[protein] + ATP = O-phospho-L-seryl-[protein] + ADP + H(+). It catalyses the reaction L-threonyl-[protein] + ATP = O-phospho-L-threonyl-[protein] + ADP + H(+). Activation requires multiple phosphorylation events on serine/threonine residues. Activation appears to be first mediated by phosphorylation of multiple sites in the autoinhibitory domain, which facilitates phosphorylation at Thr-412, disrupting the autoinhibitory mechanism and allowing phosphorylation of Thr-252 by PDPK1. The active conformation of the kinase is believed to be stabilized by a mechanism involving three conserved phosphorylation sites located in the kinase domain activation loop (Thr-252) and in the AGC-kinase C-terminal domain (Ser-394 in the middle of the tail/linker region and Thr-412 within a hydrophobic motif at its end). Activated by mTORC1; isoform Alpha I and isoform Alpha II are sensitive to rapamycin, which inhibits activating phosphorylation at Thr-412. Activated by PDPK1. In terms of biological role, serine/threonine-protein kinase that acts downstream of mTOR signaling in response to growth factors and nutrients to promote cell proliferation, cell growth and cell cycle progression. Regulates protein synthesis through phosphorylation of EIF4B, RPS6 and EEF2K, and contributes to cell survival by repressing the pro-apoptotic function of BAD. Under conditions of nutrient depletion, the inactive form associates with the EIF3 translation initiation complex. Upon mitogenic stimulation, phosphorylation by the mechanistic target of rapamycin complex 1 (mTORC1) leads to dissociation from the EIF3 complex and activation. The active form then phosphorylates and activates several substrates in the pre-initiation complex, including the EIF2B complex and the cap-binding complex component EIF4B. Also controls translation initiation by phosphorylating a negative regulator of EIF4A, PDCD4, targeting it for ubiquitination and subsequent proteolysis. Promotes initiation of the pioneer round of protein synthesis by phosphorylating POLDIP3/SKAR. In response to IGF1, activates translation elongation by phosphorylating EEF2 kinase (EEF2K), which leads to its inhibition and thus activation of EEF2. Also plays a role in feedback regulation of mTORC2 by mTORC1 by phosphorylating MAPKAP1/SIN1, MTOR and RICTOR, resulting in the inhibition of mTORC2 and AKT1 signaling. Also involved in feedback regulation of mTORC1 and mTORC2 by phosphorylating DEPTOR. Mediates cell survival by phosphorylating the pro-apoptotic protein BAD and suppressing its pro-apoptotic function. Phosphorylates mitochondrial URI1 leading to dissociation of a URI1-PPP1CC complex. The free mitochondrial PPP1CC can then dephosphorylate RPS6KB1 at Thr-412, which is proposed to be a negative feedback mechanism for the RPS6KB1 anti-apoptotic function. Mediates TNF-alpha-induced insulin resistance by phosphorylating IRS1 at multiple serine residues, resulting in accelerated degradation of IRS1. In cells lacking functional TSC1-2 complex, constitutively phosphorylates and inhibits GSK3B. May be involved in cytoskeletal rearrangement through binding to neurabin. Phosphorylates and activates the pyrimidine biosynthesis enzyme CAD, downstream of MTOR. Following activation by mTORC1, phosphorylates EPRS and thereby plays a key role in fatty acid uptake by adipocytes and also most probably in interferon-gamma-induced translation inhibition. This chain is Ribosomal protein S6 kinase beta-1 (RPS6KB1), found in Homo sapiens (Human).